The primary structure comprises 77 residues: uncharacterized protein (77 aa).

This is an uncharacterized protein from Plasmodium falciparum (isolate fcm17 / Senegal).